The primary structure comprises 93 residues: Beta-defensin 128 (93 aa).

The N-terminal stretch at 1 to 18 (MKLFLVLIILLFEVLTDG) is a signal peptide. Intrachain disulfides connect Cys-24/Cys-52, Cys-32/Cys-46, and Cys-36/Cys-53.

The protein belongs to the beta-defensin family.

The protein resides in the secreted. Its function is as follows. Has antibacterial activity. This Macaca fascicularis (Crab-eating macaque) protein is Beta-defensin 128 (DEFB128).